A 387-amino-acid chain; its full sequence is Chorismate synthase (387 aa).

2 residues coordinate NADP(+): Arg39 and Arg45. The segment at 92–113 is disordered; that stretch reads PVEEGSEEKRRVSRPRPGHADL. FMN-binding positions include 130-132, 250-251, Gly295, 310-314, and Arg336; these read RSS, QA, and KPIPT.

It belongs to the chorismate synthase family. Homotetramer. It depends on FMNH2 as a cofactor.

It carries out the reaction 5-O-(1-carboxyvinyl)-3-phosphoshikimate = chorismate + phosphate. The protein operates within metabolic intermediate biosynthesis; chorismate biosynthesis; chorismate from D-erythrose 4-phosphate and phosphoenolpyruvate: step 7/7. Functionally, catalyzes the anti-1,4-elimination of the C-3 phosphate and the C-6 proR hydrogen from 5-enolpyruvylshikimate-3-phosphate (EPSP) to yield chorismate, which is the branch point compound that serves as the starting substrate for the three terminal pathways of aromatic amino acid biosynthesis. This reaction introduces a second double bond into the aromatic ring system. The protein is Chorismate synthase of Brevibacillus brevis (strain 47 / JCM 6285 / NBRC 100599).